A 1528-amino-acid polypeptide reads, in one-letter code: Intraflagellar transport protein 121 (1528 aa).

WD repeat units follow at residues 123–170 (SNRA…GSAP), 244–285 (SSMP…SSVS), 619–667 (PSLT…SEFL), and 759–798 (PELI…REDS). Positions 914-933 (DSGLDVTASNSSQPSTQTSQ) are disordered. Low complexity predominate over residues 920–933 (TASNSSQPSTQTSQ).

It localises to the cell projection. Its subcellular location is the cilium. It is found in the flagellum. The protein resides in the cytoplasm. The protein localises to the cytoskeleton. It localises to the flagellum axoneme. Its subcellular location is the flagellum basal body. Functionally, component of the intraflagellar transport complex A (IFT-A) involved in flagellar assembly. This Giardia intestinalis (strain ATCC 50803 / WB clone C6) (Giardia lamblia) protein is Intraflagellar transport protein 121.